Here is a 430-residue protein sequence, read N- to C-terminus: Probable FAD-dependent monooxygenase (430 aa).

The N-terminal stretch at 1 to 23 is a signal peptide; the sequence is MGSTSTPPHVLIIGAGITGLALA. 9–37 is an FAD binding site; sequence HVLIIGAGITGLALAQALRKHGVSFAVYE. N-linked (GlcNAc...) asparagine glycosylation is found at Asn130 and Asn151. 307–330 is a binding site for FAD; sequence LEDWPTPPKGSWSNLGGTATLVGD.

It depends on FAD as a cofactor.

This Arthroderma benhamiae (strain ATCC MYA-4681 / CBS 112371) (Trichophyton mentagrophytes) protein is Probable FAD-dependent monooxygenase.